The primary structure comprises 568 residues: MAEARDLFKEFKVQSVSEFFRRNAAMLGYTGSIRSLTTVIHEAVTNSLDACEEAGILPYVRVEIEELGKEHYKVIVEDNGPGIPEDYIPHVFGKMLAGTKAHRNIQSRGQQGIGISGAVMFAQITSGKATRVITSTGDDEIVEAWVKIDVQKNEGKIVKKIKHPNPKRWRGTRIELEVKNVKYVRSKQGVYWYLKLTAIANPHAHIELVEPDGKLIVFPRSSEDIPEPPVEMKPHPKGVMTDDVYTMAHRSKRSTVRRFLVSEFSRISDKKVDELVLYIAALRLINREVTDQNLKSQLIERLANGEVEKVLKSFGRKWKKVVEEVEKIMEKPPEKLTWHEAEEIVEAFKLMKFLAPPTYGLRPIGEENIEKGLSSILRPEFVTAVTRPPKVYSGGIPFQVEVGIAYGGEITNSEILRYANRVPLLFDAGSCVITSAVRSIDWRRYRVESFDNAPLVVLVNVVSVHVPYTSTGKQSIASIDEIYNEIRLALMEAARRLAAYLGGKYRRLYQIRRKKIFEKYLPEIARSLHILTGEPEEKIKEYFLRLIESKITVAQEGVSEVEVEEGEA.

ATP is bound by residues Asn-46, Asp-78, 99-100 (TK), 109-116 (GQQGIGIS), and Lys-473.

It belongs to the TOP6B family. Homodimer. Heterotetramer of two Top6A and two Top6B chains.

The enzyme catalyses ATP-dependent breakage, passage and rejoining of double-stranded DNA.. Relaxes both positive and negative superturns and exhibits a strong decatenase activity. The chain is Type 2 DNA topoisomerase 6 subunit B from Pyrococcus furiosus (strain ATCC 43587 / DSM 3638 / JCM 8422 / Vc1).